The following is a 384-amino-acid chain: PqqA peptide cyclase (384 aa).

The region spanning 5–220 (VGLPLWLLAE…TNEYREKLKA (216 aa)) is the Radical SAM core domain. 3 residues coordinate [4Fe-4S] cluster: Cys19, Cys23, and Cys26.

It belongs to the radical SAM superfamily. PqqE family. As to quaternary structure, interacts with PqqD. The interaction is necessary for activity of PqqE. [4Fe-4S] cluster serves as cofactor.

The enzyme catalyses [PQQ precursor protein] + S-adenosyl-L-methionine = E-Y cross-linked-[PQQ precursor protein] + 5'-deoxyadenosine + L-methionine + H(+). The protein operates within cofactor biosynthesis; pyrroloquinoline quinone biosynthesis. Functionally, catalyzes the cross-linking of a glutamate residue and a tyrosine residue in the PqqA protein as part of the biosynthesis of pyrroloquinoline quinone (PQQ). In Acinetobacter baumannii (strain SDF), this protein is PqqA peptide cyclase.